The following is an 878-amino-acid chain: Probable glucan endo-1,3-beta-glucosidase ARB_02077 (878 aa).

Residues 1–27 (MARGLVSSLLLGQLLLVLVGLFSPAGA) form the signal peptide. 4 N-linked (GlcNAc...) asparagine glycosylation sites follow: N228, N257, N290, and N297. The segment at 373 to 472 (AGSGSKAKRL…TACPSAPVTK (100 aa)) is disordered. The span at 400-416 (APAPQPPAQSTAPPYPI) shows a compositional bias: pro residues. Residues 433 to 452 (VPTRVPTGGVPSGTTGTAPS) are compositionally biased toward low complexity. N505, N659, N795, and N862 each carry an N-linked (GlcNAc...) asparagine glycan.

It belongs to the glycosyl hydrolase 55 family.

The protein resides in the secreted. The enzyme catalyses Hydrolysis of (1-&gt;3)-beta-D-glucosidic linkages in (1-&gt;3)-beta-D-glucans.. Probable glucan endo-1,3-beta-glucosidase involved in the hydrolysis of fungal cell wall. Classified as a small-oligosaccharide-producing type based its the end products: glucose, laminaribiose or laminaritetraose. This chain is Probable glucan endo-1,3-beta-glucosidase ARB_02077, found in Arthroderma benhamiae (strain ATCC MYA-4681 / CBS 112371) (Trichophyton mentagrophytes).